Consider the following 413-residue polypeptide: CinA-like protein (413 aa).

The protein belongs to the CinA family.

This is CinA-like protein from Geobacter metallireducens (strain ATCC 53774 / DSM 7210 / GS-15).